Here is a 96-residue protein sequence, read N- to C-terminus: Small ribosomal subunit protein uS17 (96 aa).

Belongs to the universal ribosomal protein uS17 family. In terms of assembly, part of the 30S ribosomal subunit.

One of the primary rRNA binding proteins, it binds specifically to the 5'-end of 16S ribosomal RNA. The chain is Small ribosomal subunit protein uS17 from Deinococcus radiodurans (strain ATCC 13939 / DSM 20539 / JCM 16871 / CCUG 27074 / LMG 4051 / NBRC 15346 / NCIMB 9279 / VKM B-1422 / R1).